The sequence spans 158 residues: SH3 domain-binding glutamic acid-rich protein homolog (158 aa).

Positions Thr40 to Met51 are enriched in basic and acidic residues. The segment at Thr40–Gln74 is disordered. A compositionally biased stretch (polar residues) spans Gln52–Thr61. Residues Pro67–Pro73 carry the SH3-binding motif. Thr109 bears the Phosphothreonine mark. Positions Leu118–Val158 are disordered.

This sequence belongs to the SH3BGR family.

In Drosophila melanogaster (Fruit fly), this protein is SH3 domain-binding glutamic acid-rich protein homolog (Sh3beta).